The chain runs to 314 residues: Deoxymugineic acid synthase 1 (314 aa).

A disordered region spans residues 1-21 (MGAGDRTVAGMPRIGMGTAVQ). Asp44 serves as a coordination point for NADP(+). Residue Tyr49 is the Proton donor of the active site. His112 contacts substrate. Residues 158-159 (AN), Gln180, 258-266 (FDEARMREN), and 273-281 (ELTEEERRR) contribute to the NADP(+) site.

Belongs to the aldo/keto reductase family.

The enzyme catalyses 2'-deoxymugineate + NAD(+) = 3''-deamino-3''-oxonicotianamine + NADH + H(+). The catalysed reaction is 2'-deoxymugineate + NADP(+) = 3''-deamino-3''-oxonicotianamine + NADPH + H(+). The protein operates within siderophore biosynthesis. Catalyzes the reduction of a 3''-keto intermediate during the biosynthesis of 2'-deoxymugineic acid (DMA) from L-Met. Involved in the formation of phytosiderophores (MAs) belonging to the mugineic acid family and required to acquire iron. The polypeptide is Deoxymugineic acid synthase 1 (Hordeum vulgare (Barley)).